The chain runs to 663 residues: 72 kDa type IV collagenase (663 aa).

The signal sequence occupies residues 1–26; sequence MKTHSVFGFFFKVLLIQVYLFNKTLA. Positions 27-106 are cleaved as a propeptide — activation peptide; it reads APSPIIKFPG…PRCGNPDVAN (80 aa). The Cysteine switch signature appears at 97-104; the sequence is PRCGNPDV. Cysteine 99 contacts Zn(2+). A collagenase-like 1 region spans residues 107–218; it reads YNFFPRKPKW…LWTLGEGQVV (112 aa). Positions 131 and 165 each coordinate Ca(2+). 2 residues coordinate Zn(2+): histidine 175 and aspartate 177. Ca(2+) contacts are provided by aspartate 182 and glycine 183. Histidine 190 serves as a coordination point for Zn(2+). The Ca(2+) site is built by glycine 197, glycine 199, and aspartate 201. Histidine 203 is a Zn(2+) binding site. Aspartate 205, aspartate 206, and glutamate 208 together coordinate Ca(2+). Positions 219–393 are collagen-binding; that stretch reads RVKYGNADGE…WGFCPDQGYS (175 aa). Fibronectin type-II domains lie at 225–273, 283–331, and 341–389; these read ADGE…FCPH, GDGQ…FCPE, and SEGA…FCPD. Cystine bridges form between cysteine 230-cysteine 256, cysteine 244-cysteine 271, cysteine 288-cysteine 314, cysteine 302-cysteine 329, cysteine 346-cysteine 372, and cysteine 360-cysteine 387. Residues 394 to 468 form a collagenase-like 2 region; sequence LFLVAAHEFG…GPRPTLGPVT (75 aa). Histidine 400 contacts Zn(2+). Glutamate 401 is a catalytic residue. Residues histidine 404 and histidine 410 each coordinate Zn(2+). The disordered stretch occupies residues 445-464; that stretch reads SPDVEPGPGPGPGPGPRPTL. Pro residues predominate over residues 449 to 463; that stretch reads EPGPGPGPGPGPRPT. Residues cysteine 472 and cysteine 663 are joined by a disulfide bond. 4 Hemopexin repeats span residues 475–519, 520–566, 568–616, and 617–663; these read DIVF…WPDL, PEKI…GLPP, VQRI…WNGV, and PDNL…WLGC. Aspartate 479, aspartate 524, aspartate 572, and aspartate 621 together coordinate Ca(2+).

Belongs to the peptidase M10A family. In terms of assembly, ligand for integrin alpha-V/beta-3. It depends on Ca(2+) as a cofactor. Zn(2+) serves as cofactor. Post-translationally, the propeptide is processed by MMP14 (MT-MMP1) and MMP16 (MT-MMP3). As to expression, produced by normal skin fibroblasts.

It is found in the secreted. Its subcellular location is the extracellular space. It localises to the extracellular matrix. The catalysed reaction is Cleavage of gelatin type I and collagen types IV, V, VII, X. Cleaves the collagen-like sequence Pro-Gln-Gly-|-Ile-Ala-Gly-Gln.. This chain is 72 kDa type IV collagenase (MMP2), found in Gallus gallus (Chicken).